The chain runs to 166 residues: uncharacterized protein (166 aa).

Over residues 73-88 the composition is skewed to low complexity; it reads SKLNNNNNSNNNNKMA. Disordered stretches follow at residues 73-101 and 126-166; these read SKLN…EKDK and PQSS…EFNN. Residues 89 to 101 show a composition bias toward basic and acidic residues; sequence VDNKDNKDNEKDK. Low complexity predominate over residues 134-154; sequence SPTHKSPSSSPKTISPVKVSP. A compositionally biased stretch (polar residues) spans 155 to 166; sequence TSSPIKNPEFNN.

This is an uncharacterized protein from Dictyostelium discoideum (Social amoeba).